The sequence spans 361 residues: Caffeic acid 3-O-methyltransferase 2 (361 aa).

Residue 128-134 (MNQDKVL) participates in substrate binding. A substrate binding region spans residues 160–178 (AFEYHGTDPRFNKVFNQGM). The S-adenosyl-L-methionine site is built by glycine 206, aspartate 229, aspartate 249, methionine 250, and lysine 263. Histidine 267 functions as the Proton acceptor in the catalytic mechanism.

The protein belongs to the class I-like SAM-binding methyltransferase superfamily. Cation-independent O-methyltransferase family. COMT subfamily. In terms of assembly, homodimer.

It catalyses the reaction (E)-caffeate + S-adenosyl-L-methionine = (E)-ferulate + S-adenosyl-L-homocysteine + H(+). Its pathway is aromatic compound metabolism; phenylpropanoid biosynthesis. Catalyzes the conversion of caffeic acid to ferulic acid and of 5-hydroxyferulic acid to sinapic acid. The resulting products may subsequently be converted to the corresponding alcohols that are incorporated into lignins. This Ocimum basilicum (Sweet basil) protein is Caffeic acid 3-O-methyltransferase 2 (COMT2).